We begin with the raw amino-acid sequence, 308 residues long: Transaldolase (308 aa).

Lys-125 serves as the catalytic Schiff-base intermediate with substrate.

Belongs to the transaldolase family. Type 1 subfamily. As to quaternary structure, homodimer.

The protein resides in the cytoplasm. It catalyses the reaction D-sedoheptulose 7-phosphate + D-glyceraldehyde 3-phosphate = D-erythrose 4-phosphate + beta-D-fructose 6-phosphate. It participates in carbohydrate degradation; pentose phosphate pathway; D-glyceraldehyde 3-phosphate and beta-D-fructose 6-phosphate from D-ribose 5-phosphate and D-xylulose 5-phosphate (non-oxidative stage): step 2/3. Its function is as follows. Transaldolase is important for the balance of metabolites in the pentose-phosphate pathway. This Pseudomonas fluorescens (strain Pf0-1) protein is Transaldolase.